The primary structure comprises 517 residues: Nuclear receptor subfamily 5 group A member 2 (517 aa).

The segment at residues 43–118 (DEMCPVCGDK…VGMKLEAVRA (76 aa)) is a DNA-binding region (nuclear receptor). Residues C46, C49, C63, C66, C82, C88, C98, and C101 each coordinate Zn(2+). 2 NR C4-type zinc fingers span residues 46–66 (CPVC…CESC) and 82–101 (CIEN…CPYC). Residues 112 to 127 (KLEAVRADRMRGGRNK) form a C-terminal extension (CTE) region. The FTZ-F1 box motif lies at 128–147 (FGPMYKRDRALKQQKKALIR). The interval 182-211 (GLPLSHHHHHHHHHHHHSSSSAGLPPADFD) is disordered. Over residues 186-199 (SHHHHHHHHHHHHS) the composition is skewed to basic residues. Residues 276-515 (SFPHLVVELL…NLLIEMLHAK (240 aa)) form the NR LBD domain. A phospholipid derivative-binding positions include 397–400 (GATL), Y492, and K496. The AF-2 stretch occupies residues 504 to 515 (CNNLLIEMLHAK).

It belongs to the nuclear hormone receptor family. NR5 subfamily. As to quaternary structure, monomer; Binds DNA as a monomer.

Its subcellular location is the nucleus. The protein resides in the chromosome. Its function is as follows. Orphan nuclear receptor that binds DNA as a monomer to the 5'-TCAAGGCCA-3' sequence and controls expression of target genes: regulates key biological processes, such as cholesterol and bile acid synthesis pathways, as well as cartilage, liver and pancreas morphogenesis. Ligand-binding causes conformational change which causes recruitment of coactivators, promoting target gene activation. The specific ligand is unknown, but specific phospholipids, such as phosphatidylethanolamine, phosphatidylserine, dilauroyl phosphatidylcholine and diundecanoyl phosphatidylcholine can act as ligand in vitro. Acts as a pioneer transcription factor, which unwraps target DNA from histones and elicits local opening of closed chromatin. Involved in the formation of connective tissue in lower jaw. Lacks transcription factor activity; unable to activate expression of target genes. This chain is Nuclear receptor subfamily 5 group A member 2, found in Danio rerio (Zebrafish).